Consider the following 171-residue polypeptide: Cytochrome c-type biogenesis protein CcmE (171 aa).

The Cytoplasmic segment spans residues 1 to 7 (MNRKQKR). A helical; Signal-anchor for type II membrane protein transmembrane segment spans residues 8-28 (LAVIAGGMGFIAAAVLLVMFA). Topologically, residues 29-171 (FSQSVAYFYM…NPGEEAKATQ (143 aa)) are periplasmic. Positions 124 and 128 each coordinate heme. Residues 132–171 (DVADRLKQQGLWKEGQGGQESPGKEGQGQENPGEEAKATQ) are disordered.

It belongs to the CcmE/CycJ family.

The protein localises to the cell inner membrane. In terms of biological role, heme chaperone required for the biogenesis of c-type cytochromes. Transiently binds heme delivered by CcmC and transfers the heme to apo-cytochromes in a process facilitated by CcmF and CcmH. In Rhizobium leguminosarum bv. trifolii (strain WSM2304), this protein is Cytochrome c-type biogenesis protein CcmE.